The chain runs to 37 residues: Large ribosomal subunit protein bL36 (37 aa).

The protein belongs to the bacterial ribosomal protein bL36 family.

The chain is Large ribosomal subunit protein bL36 from Mycoplasma genitalium (strain ATCC 33530 / DSM 19775 / NCTC 10195 / G37) (Mycoplasmoides genitalium).